A 428-amino-acid polypeptide reads, in one-letter code: Kynureninase (428 aa).

Pyridoxal 5'-phosphate is bound by residues threonine 104, threonine 105, 132–135 (FPSD), aspartate 213, histidine 216, and tyrosine 238. N6-(pyridoxal phosphate)lysine is present on lysine 239. Pyridoxal 5'-phosphate-binding residues include tryptophan 267 and threonine 295.

The protein belongs to the kynureninase family. Homodimer. Requires pyridoxal 5'-phosphate as cofactor.

It catalyses the reaction L-kynurenine + H2O = anthranilate + L-alanine + H(+). The catalysed reaction is 3-hydroxy-L-kynurenine + H2O = 3-hydroxyanthranilate + L-alanine + H(+). The protein operates within amino-acid degradation; L-kynurenine degradation; L-alanine and anthranilate from L-kynurenine: step 1/1. Its pathway is cofactor biosynthesis; NAD(+) biosynthesis; quinolinate from L-kynurenine: step 2/3. Its function is as follows. Catalyzes the cleavage of L-kynurenine (L-Kyn) and L-3-hydroxykynurenine (L-3OHKyn) into anthranilic acid (AA) and 3-hydroxyanthranilic acid (3-OHAA), respectively. The polypeptide is Kynureninase (Bacillus cereus (strain ATCC 14579 / DSM 31 / CCUG 7414 / JCM 2152 / NBRC 15305 / NCIMB 9373 / NCTC 2599 / NRRL B-3711)).